Consider the following 137-residue polypeptide: Large ribosomal subunit protein eL28 (137 aa).

Ser-2 bears the N-acetylserine mark. Glycyl lysine isopeptide (Lys-Gly) (interchain with G-Cter in SUMO2) cross-links involve residues Lys-58 and Lys-65. Ser-115 carries the post-translational modification Phosphoserine.

This sequence belongs to the eukaryotic ribosomal protein eL28 family. Component of the large ribosomal subunit.

The protein localises to the cytoplasm. Functionally, component of the large ribosomal subunit. The ribosome is a large ribonucleoprotein complex responsible for the synthesis of proteins in the cell. This chain is Large ribosomal subunit protein eL28 (RPL28), found in Bos taurus (Bovine).